Consider the following 406-residue polypeptide: Trk system potassium uptake protein trkA homolog 1 (406 aa).

Residues 1–124 (MKAVIIGAGE…RAQVGVDLMI (124 aa)) enclose the RCK N-terminal 1 domain. NAD(+) contacts are provided by residues 7 to 11 (GAGEV), aspartate 29, 70 to 71 (TG), and arginine 101. One can recognise an RCK C-terminal domain in the interval 144–225 (IDAEMFAEGK…MEDLESVFGS (82 aa)). Residues 230–348 (RTRILLIGCG…FEMVGIDMAV (119 aa)) form the RCK N-terminal 2 domain. 232–262 (RILLIGCGIVGMYLAKLIDKEENADLRIIEH) serves as a coordination point for NAD(+).

Its function is as follows. Part of a potassium transport system. This Methanosarcina mazei (Methanosarcina frisia) protein is Trk system potassium uptake protein trkA homolog 1 (trkA1).